Consider the following 132-residue polypeptide: ATP synthase epsilon chain (132 aa).

This sequence belongs to the ATPase epsilon chain family. In terms of assembly, F-type ATPases have 2 components, CF(1) - the catalytic core - and CF(0) - the membrane proton channel. CF(1) has five subunits: alpha(3), beta(3), gamma(1), delta(1), epsilon(1). CF(0) has three main subunits: a, b and c.

The protein localises to the cell inner membrane. Functionally, produces ATP from ADP in the presence of a proton gradient across the membrane. In Aquifex aeolicus (strain VF5), this protein is ATP synthase epsilon chain (atpC).